A 218-amino-acid polypeptide reads, in one-letter code: Peptide methionine sulfoxide reductase MsrA (218 aa).

Cys-54 is an active-site residue.

The protein belongs to the MsrA Met sulfoxide reductase family.

The enzyme catalyses L-methionyl-[protein] + [thioredoxin]-disulfide + H2O = L-methionyl-(S)-S-oxide-[protein] + [thioredoxin]-dithiol. It carries out the reaction [thioredoxin]-disulfide + L-methionine + H2O = L-methionine (S)-S-oxide + [thioredoxin]-dithiol. Has an important function as a repair enzyme for proteins that have been inactivated by oxidation. Catalyzes the reversible oxidation-reduction of methionine sulfoxide in proteins to methionine. This is Peptide methionine sulfoxide reductase MsrA from Azorhizobium caulinodans (strain ATCC 43989 / DSM 5975 / JCM 20966 / LMG 6465 / NBRC 14845 / NCIMB 13405 / ORS 571).